The sequence spans 267 residues: Octanoyltransferase (267 aa).

In terms of domain architecture, BPL/LPL catalytic spans 77–265; that stretch reads GTASELVWLV…AFESVFGPRQ (189 aa). Residues 116–123, 196–198, and 209–211 each bind substrate; these read RGGEYTYH, AIG, and GIA. C227 functions as the Acyl-thioester intermediate in the catalytic mechanism.

Belongs to the LipB family.

It localises to the cytoplasm. The enzyme catalyses octanoyl-[ACP] + L-lysyl-[protein] = N(6)-octanoyl-L-lysyl-[protein] + holo-[ACP] + H(+). The protein operates within protein modification; protein lipoylation via endogenous pathway; protein N(6)-(lipoyl)lysine from octanoyl-[acyl-carrier-protein]: step 1/2. Its function is as follows. Catalyzes the transfer of endogenously produced octanoic acid from octanoyl-acyl-carrier-protein onto the lipoyl domains of lipoate-dependent enzymes. Lipoyl-ACP can also act as a substrate although octanoyl-ACP is likely to be the physiological substrate. In Brucella suis biovar 1 (strain 1330), this protein is Octanoyltransferase.